Consider the following 362-residue polypeptide: Dihydroorotate dehydrogenase (quinone) (362 aa).

Residues 62 to 66 (AGYDK) and Thr86 contribute to the FMN site. Lys66 is a binding site for substrate. 111 to 115 (NRLGF) contributes to the substrate binding site. FMN-binding residues include Asn139 and Asn170. Asn170 contributes to the substrate binding site. Residue Ser173 is the Nucleophile of the active site. Asn175 serves as a coordination point for substrate. FMN-binding residues include Lys215 and Ser243. 244–245 (NT) serves as a coordination point for substrate. FMN contacts are provided by residues Gly266, Gly295, and 316–317 (YS).

It belongs to the dihydroorotate dehydrogenase family. Type 2 subfamily. In terms of assembly, monomer. FMN is required as a cofactor.

It is found in the cell membrane. The catalysed reaction is (S)-dihydroorotate + a quinone = orotate + a quinol. It participates in pyrimidine metabolism; UMP biosynthesis via de novo pathway; orotate from (S)-dihydroorotate (quinone route): step 1/1. Catalyzes the conversion of dihydroorotate to orotate with quinone as electron acceptor. This is Dihydroorotate dehydrogenase (quinone) from Rhizobium etli (strain CIAT 652).